Here is a 391-residue protein sequence, read N- to C-terminus: Isochorismate synthase EntC (391 aa).

Mg(2+) is bound by residues threonine 140, threonine 142, valine 145, and aspartate 146. Lysine 147 serves as the catalytic Proton acceptor. The active-site Proton donor is glutamate 197. Isochorismate-binding residues include glycine 214, serine 215, glutamate 241, alanine 303, arginine 347, and glycine 361. A Mg(2+)-binding site is contributed by glutamate 241. Glutamate 376 lines the Mg(2+) pocket. Lysine 380 contributes to the isochorismate binding site.

Belongs to the isochorismate synthase family. In terms of assembly, monomer. Forms a specific pairwise interaction with EntB; this interaction likely facilitates substrate channeling to connect the EntB and EntC active sites. Requires Mg(2+) as cofactor.

It catalyses the reaction chorismate = isochorismate. The protein operates within siderophore biosynthesis; enterobactin biosynthesis. Involved in the biosynthesis of the siderophore enterobactin (macrocyclic trimeric lactone of N-(2,3-dihydroxybenzoyl)-serine). Catalyzes the reversible conversion of chorismate to isochorismate. This chain is Isochorismate synthase EntC, found in Escherichia coli O157:H7.